The primary structure comprises 311 residues: Pyrimidine-specific ribonucleoside hydrolase RihA (311 aa).

H240 is a catalytic residue.

The protein belongs to the IUNH family. RihA subfamily.

In terms of biological role, hydrolyzes cytidine or uridine to ribose and cytosine or uracil, respectively. The polypeptide is Pyrimidine-specific ribonucleoside hydrolase RihA (Salmonella choleraesuis (strain SC-B67)).